The sequence spans 186 residues: Nicotinamide-nucleotide adenylyltransferase (186 aa).

It belongs to the archaeal NMN adenylyltransferase family.

The protein resides in the cytoplasm. The enzyme catalyses beta-nicotinamide D-ribonucleotide + ATP + H(+) = diphosphate + NAD(+). Its pathway is cofactor biosynthesis; NAD(+) biosynthesis; NAD(+) from nicotinamide D-ribonucleotide: step 1/1. This Thermococcus sibiricus (strain DSM 12597 / MM 739) protein is Nicotinamide-nucleotide adenylyltransferase.